A 260-amino-acid chain; its full sequence is 3'-5' ssDNA/RNA exonuclease TatD (260 aa).

A divalent metal cation-binding residues include Glu92, His128, and His153.

It belongs to the metallo-dependent hydrolases superfamily. TatD-type hydrolase family. TatD subfamily. As to quaternary structure, monomer. Mg(2+) is required as a cofactor.

It is found in the cytoplasm. Functionally, 3'-5' exonuclease that prefers single-stranded DNA and RNA. May play a role in the H(2)O(2)-induced DNA damage repair. The protein is 3'-5' ssDNA/RNA exonuclease TatD of Pantoea vagans (strain C9-1) (Pantoea agglomerans (strain C9-1)).